The chain runs to 240 residues: tRNA1(Val) (adenine(37)-N6)-methyltransferase (240 aa).

Belongs to the methyltransferase superfamily. tRNA (adenine-N(6)-)-methyltransferase family.

It is found in the cytoplasm. It catalyses the reaction adenosine(37) in tRNA1(Val) + S-adenosyl-L-methionine = N(6)-methyladenosine(37) in tRNA1(Val) + S-adenosyl-L-homocysteine + H(+). Specifically methylates the adenine in position 37 of tRNA(1)(Val) (anticodon cmo5UAC). This chain is tRNA1(Val) (adenine(37)-N6)-methyltransferase, found in Vibrio cholerae serotype O1 (strain ATCC 39315 / El Tor Inaba N16961).